The following is a 229-amino-acid chain: Cytochrome c oxidase subunit 2 (229 aa).

The Mitochondrial intermembrane portion of the chain corresponds to 1 to 26 (MSTWANLGLQDSASPLMEQLIFFHDH). The chain crosses the membrane as a helical span at residues 27–48 (ALLILVMITVLVGYLMFMLFFN). At 49–62 (SYVNRFLLHGQLIE) the chain is on the mitochondrial matrix side. The chain crosses the membrane as a helical span at residues 63-82 (MIWTILPAIILLFIAMPSLR). Topologically, residues 83–229 (LLYLLDEINE…IKWISNSVNS (147 aa)) are mitochondrial intermembrane. Cu cation contacts are provided by His161, Cys196, Glu198, Cys200, His204, and Met207. Position 198 (Glu198) interacts with Mg(2+).

The protein belongs to the cytochrome c oxidase subunit 2 family. As to quaternary structure, component of the cytochrome c oxidase (complex IV, CIV), a multisubunit enzyme composed of a catalytic core of 3 subunits and several supernumerary subunits. The complex exists as a monomer or a dimer and forms supercomplexes (SCs) in the inner mitochondrial membrane with ubiquinol-cytochrome c oxidoreductase (cytochrome b-c1 complex, complex III, CIII). It depends on Cu cation as a cofactor.

It localises to the mitochondrion inner membrane. The enzyme catalyses 4 Fe(II)-[cytochrome c] + O2 + 8 H(+)(in) = 4 Fe(III)-[cytochrome c] + 2 H2O + 4 H(+)(out). Component of the cytochrome c oxidase, the last enzyme in the mitochondrial electron transport chain which drives oxidative phosphorylation. The respiratory chain contains 3 multisubunit complexes succinate dehydrogenase (complex II, CII), ubiquinol-cytochrome c oxidoreductase (cytochrome b-c1 complex, complex III, CIII) and cytochrome c oxidase (complex IV, CIV), that cooperate to transfer electrons derived from NADH and succinate to molecular oxygen, creating an electrochemical gradient over the inner membrane that drives transmembrane transport and the ATP synthase. Cytochrome c oxidase is the component of the respiratory chain that catalyzes the reduction of oxygen to water. Electrons originating from reduced cytochrome c in the intermembrane space (IMS) are transferred via the dinuclear copper A center (CU(A)) of subunit 2 and heme A of subunit 1 to the active site in subunit 1, a binuclear center (BNC) formed by heme A3 and copper B (CU(B)). The BNC reduces molecular oxygen to 2 water molecules using 4 electrons from cytochrome c in the IMS and 4 protons from the mitochondrial matrix. In Drosophila miranda (Fruit fly), this protein is Cytochrome c oxidase subunit 2 (mt:CoII).